We begin with the raw amino-acid sequence, 475 residues long: UDP-glycosyltransferase 708A6 (475 aa).

UDP-alpha-D-glucose-binding positions include S286, 348–349, 366–374, and 388–391; these read WV, HCGWNSLTE, and FGDQ.

This sequence belongs to the UDP-glycosyltransferase family. As to expression, expressed in radicles, hypocotyls and juvenile leaves. Expressed at low levels in roots.

Functionally, bifunctional glycosyltransferase that can produce both C- and O-glycosidated flavonoids. Converts 2-hydroxynaringenin to isovitexin. Converts eriodictyol to orientin and isoorientin. Converts naringenin and eriodictyol to naringenin 7-O-glucoside and eriodictyol 7-O-glucoside, respectively. The sequence is that of UDP-glycosyltransferase 708A6 from Zea mays (Maize).